The primary structure comprises 267 residues: Proenkephalin-A (267 aa).

The signal sequence occupies residues 1-24 (MARFLTLCTWLLLLGPGLLATVRA). Cystine bridges form between Cys26–Cys48, Cys30–Cys52, and Cys33–Cys65. Residues 163 to 175 (TGDNRERSHHQDG) are compositionally biased toward basic and acidic residues. Residues 163–182 (TGDNRERSHHQDGSDNEEEV) are disordered. Propeptides lie at residues 196–207 (SPQLEDEAKELQ) and 217–227 (VGRPEWWMDYQ). Ser251 is subject to Phosphoserine.

This sequence belongs to the opioid neuropeptide precursor family. In terms of processing, proenkephalin-A is cleaved by CTSL to generate Met-enkephalin. Processed and degraded by ACE. Post-translationally, probably cleaved by ACE. In terms of processing, processed by ACE to generate Met-enkephalin in the nucleus accumbens of the brain. The N-terminal domain contains 6 conserved cysteines thought to be involved in disulfide bonding and/or processing.

It is found in the cytoplasmic vesicle. Its subcellular location is the secretory vesicle. It localises to the chromaffin granule lumen. The protein localises to the secreted. Its function is as follows. Neuropeptide that competes with and mimic the effects of opiate drugs. They play a role in a number of physiologic functions, including pain perception and responses to stress. Functionally, met-enkephalin-Arg-Phe neuropeptide acts as a strong ligand of Mu-type opioid receptor OPRM1. Met-enkephalin-Arg-Phe-binding to OPRM1 in the nucleus accumbens of the brain increases activation of OPRM1, leading to long-term synaptic depression of glutamate release. In terms of biological role, increases glutamate release in the striatum and decreases GABA concentration in the striatum. Increases glutamate release in the striatum. The sequence is that of Proenkephalin-A from Homo sapiens (Human).